The sequence spans 293 residues: Rhomboid-like protease 1 (293 aa).

The segment at 18-40 (EHTPLYNAETGSRDSDSTSSGGA) is disordered. A run of 6 helical transmembrane segments spans residues 62–82 (VVLA…CLDT), 112–132 (LLLP…VFFQ), 148–168 (FTGL…TAFF), 174–194 (VGAS…MALT), 217–237 (LLMF…GGLL), and 262–282 (AAAI…LYAV). The active-site Nucleophile is the S177. The active site involves H232.

It belongs to the peptidase S54 family.

It is found in the cytoplasmic vesicle. It localises to the secretory vesicle. Its subcellular location is the microneme membrane. The enzyme catalyses Cleaves type-1 transmembrane domains using a catalytic dyad composed of serine and histidine that are contributed by different transmembrane domains.. Functionally, serine protease involved in intramembrane proteolysis and the subsequent release of polypeptides from their membrane anchors. Has no detectable activity towards MIC2. This is Rhomboid-like protease 1 (ROM1) from Toxoplasma gondii.